A 513-amino-acid polypeptide reads, in one-letter code: MSEQNQTPDAELDVQEFNNEMTQRRAKLAELRTKGNPFPNDFRRDQISNELHAAFDDKSQDELAAEKHYVKIAGRIMTRRIMGKASFATLQDMGGKIQIYVTRDDLPEGFYNEQFKKWDLGDIVGVEGYMFRTNTGELSVHTTSIRLLTKALRPLPEKHKGLTDQEARCRQRYLDLIANEESRRTFQIRNQVMNGIRNFLNSKNFMEVETPMMQVIPGGASARPFVTHHNALDIDMYLRIAPELYLKRLVVGGFERVYEVNRNFRNEGISVRHNPEFTMLEFYMAYADYNDLMDLTEEMLRTLAQNIHGTTKIRYAKDGEEGIEIDFGQPFARMTMVESILKYGNDVKAEELTTLEGAIAVAKRHHVELMKSWELGHVITAIFEETAEHMLHQPTFITEYPAAVSPLARRNDDNPEVTDRFEFFIGGREIANGFSELNDAEDQAERFQAQVAQKEAGDDEAMFYDADFVTALEHGLPPTAGQGIGIDRLVMLFTNSHTIRDVILFPALRPSNK.

Residues E422 and E429 each contribute to the Mg(2+) site.

It belongs to the class-II aminoacyl-tRNA synthetase family. Homodimer. It depends on Mg(2+) as a cofactor.

It is found in the cytoplasm. The enzyme catalyses tRNA(Lys) + L-lysine + ATP = L-lysyl-tRNA(Lys) + AMP + diphosphate. The polypeptide is Lysine--tRNA ligase (Tolumonas auensis (strain DSM 9187 / NBRC 110442 / TA 4)).